We begin with the raw amino-acid sequence, 201 residues long: NADH-quinone oxidoreductase subunit C (201 aa).

It belongs to the complex I 30 kDa subunit family. NDH-1 is composed of 14 different subunits. Subunits NuoB, C, D, E, F, and G constitute the peripheral sector of the complex.

The protein localises to the cell inner membrane. The catalysed reaction is a quinone + NADH + 5 H(+)(in) = a quinol + NAD(+) + 4 H(+)(out). In terms of biological role, NDH-1 shuttles electrons from NADH, via FMN and iron-sulfur (Fe-S) centers, to quinones in the respiratory chain. The immediate electron acceptor for the enzyme in this species is believed to be ubiquinone. Couples the redox reaction to proton translocation (for every two electrons transferred, four hydrogen ions are translocated across the cytoplasmic membrane), and thus conserves the redox energy in a proton gradient. This Aromatoleum aromaticum (strain DSM 19018 / LMG 30748 / EbN1) (Azoarcus sp. (strain EbN1)) protein is NADH-quinone oxidoreductase subunit C.